Reading from the N-terminus, the 50-residue chain is PMTKVLNAADISKALNAFEAPGSFDHKKFFQLVGLKGKTHEQVKKVFNIL.

An EF-hand domain is found at 38–50; sequence KTHEQVKKVFNIL.

This sequence belongs to the parvalbumin family.

Probably regulates the activity of the caudal neurosecretory system. Binds two calcium ions. This chain is Parvalbumin, found in Scyliorhinus canicula (Small-spotted catshark).